The chain runs to 609 residues: Leukotriene A-4 hydrolase (609 aa).

A peptide is bound by residues Q131–Q133 and P263–E268. H292 contributes to the Zn(2+) binding site. The active-site Proton acceptor is the E293. Zn(2+) contacts are provided by H296 and E315. The active-site Proton donor is the Y380. R560–K562 serves as a coordination point for a peptide.

This sequence belongs to the peptidase M1 family. As to quaternary structure, homodimer. Zn(2+) serves as cofactor. In terms of tissue distribution, expressed in oocytes.

It is found in the cytoplasm. The enzyme catalyses Release of the N-terminal residue from a tripeptide.. It carries out the reaction leukotriene A4 + H2O = leukotriene B4. The protein operates within lipid metabolism; leukotriene B4 biosynthesis. With respect to regulation, the epoxide hydrolase activity is mildly restrained by suicide inactivation, possibly involving binding of LTA4 to Tyr-380. Its function is as follows. Bifunctional zinc metalloenzyme that comprises both epoxide hydrolase (EH) and aminopeptidase activities. Acts as an epoxide hydrolase to catalyze the conversion of leukotriene A4 (LTA4) to the pro-inflammatory mediator leukotriene B4 (LTB4). During the conversion of LTA4 to LTB4, a second product is formed, the isomeric delta6-trans-delta8-cis-LTB4 (5S,12R-dihydroxy-6,10-trans-8,14-cis-eicosatetraenoic acid), with a relative formation of 10% delta6-trans-delta8-cis-LTB4 compared to 90% LTB4. The production of delta6-trans-delta8-cis-LTB4 seems to depend on the phenylalanine residue at position 375. Also has aminopeptidase activity. In Xenopus laevis (African clawed frog), this protein is Leukotriene A-4 hydrolase.